A 196-amino-acid polypeptide reads, in one-letter code: Serine recombinase PinR (196 aa).

The Resolvase/invertase-type recombinase catalytic domain occupies 3–143; sequence RIFAYCRIST…SGIVRARGAG (141 aa). The active-site O-(5'-phospho-DNA)-serine intermediate is the serine 11.

It belongs to the site-specific recombinase resolvase family.

This chain is Serine recombinase PinR (pinR), found in Escherichia coli (strain K12).